We begin with the raw amino-acid sequence, 508 residues long: Serine carboxypeptidase 3 (508 aa).

The N-terminal stretch at 1–19 (MVTTPRLVSLLLLLALCAA) is a signal peptide. Residues 20-80 (AAGALRLPPD…PGQLLERRVT (61 aa)) constitute a propeptide that is removed on maturation. The interval 48–67 (PKDSSSSSGRHGARVGEGNE) is disordered. Residue Leu81 is modified to Blocked amino end (Leu). 3 disulfide bridges follow: Cys133–Cys373, Cys301–Cys316, and Cys339–Cys344. Residue Asn151 is glycosylated (N-linked (GlcNAc...) asparagine). Ser223 is an active-site residue. Asp411 is an active-site residue. Cys414 contacts substrate. Residue His468 is part of the active site. Residues 492 to 508 (EAVPEEESSTTSFYAAM) constitute a propeptide that is removed on maturation.

Belongs to the peptidase S10 family. In terms of assembly, monomer.

The protein localises to the secreted. It catalyses the reaction Release of a C-terminal amino acid with broad specificity.. Its activity is regulated as follows. Inhibited by mercuric ions. This is Serine carboxypeptidase 3 (CBP3) from Hordeum vulgare (Barley).